Reading from the N-terminus, the 168-residue chain is Ribonuclease H (168 aa).

One can recognise an RNase H type-1 domain in the interval 10-151 (NNIPVKIYTD…ADKLATNGKI (142 aa)). Mg(2+) contacts are provided by aspartate 19, glutamate 57, aspartate 79, and aspartate 143.

It belongs to the RNase H family. As to quaternary structure, monomer. Mg(2+) serves as cofactor.

It localises to the cytoplasm. It carries out the reaction Endonucleolytic cleavage to 5'-phosphomonoester.. In terms of biological role, endonuclease that specifically degrades the RNA of RNA-DNA hybrids. The protein is Ribonuclease H of Orientia tsutsugamushi (strain Boryong) (Rickettsia tsutsugamushi).